We begin with the raw amino-acid sequence, 354 residues long: GTPase Obg (354 aa).

An Obg domain is found at 1 to 159; it reads MKFLDQCKIY…RWIWLRLKLI (159 aa). One can recognise an OBG-type G domain in the interval 160 to 328; sequence ADVGLVGLPN…LLRAAYKQVR (169 aa). Residues 166-173, 191-195, 213-216, 280-283, and 309-311 each bind GTP; these read GLPNAGKS, FTTLT, DIPG, NKID, and SGV. Mg(2+)-binding residues include S173 and T193. Positions 335–345 are enriched in acidic residues; sequence EEEIDDDEDHV. The interval 335–354 is disordered; sequence EEEIDDDEDHVDETPGGWTP.

It belongs to the TRAFAC class OBG-HflX-like GTPase superfamily. OBG GTPase family. In terms of assembly, monomer. The cofactor is Mg(2+).

Its subcellular location is the cytoplasm. An essential GTPase which binds GTP, GDP and possibly (p)ppGpp with moderate affinity, with high nucleotide exchange rates and a fairly low GTP hydrolysis rate. Plays a role in control of the cell cycle, stress response, ribosome biogenesis and in those bacteria that undergo differentiation, in morphogenesis control. This Caulobacter vibrioides (strain ATCC 19089 / CIP 103742 / CB 15) (Caulobacter crescentus) protein is GTPase Obg.